Consider the following 579-residue polypeptide: Protein PLASTID MOVEMENT IMPAIRED 15 (579 aa).

Coiled-coil stretches lie at residues Glu-90–His-161, Lys-188–Glu-216, Gln-383–Ser-419, and Leu-481–Glu-501.

Belongs to the WEB family.

In terms of biological role, required for the chloroplast avoidance response under high intensity blue light. This avoidance response consists in the relocation of chloroplasts on the anticlinal side of exposed cells. This Arabidopsis thaliana (Mouse-ear cress) protein is Protein PLASTID MOVEMENT IMPAIRED 15 (PMI15).